The following is a 287-amino-acid chain: Proteasome assembly chaperone 1 (287 aa).

Positions methionine 1–arginine 32 are disordered. A compositionally biased stretch (acidic residues) spans aspartate 17 to arginine 32.

The protein belongs to the PSMG1 family. Forms a heterodimer with psmg2. Degraded by the proteasome upon completion of 20S proteasome maturation.

It localises to the cytoplasm. It is found in the endoplasmic reticulum. Its function is as follows. Chaperone protein which promotes assembly of the 20S proteasome as part of a heterodimer with psmg2. The polypeptide is Proteasome assembly chaperone 1 (Xenopus tropicalis (Western clawed frog)).